Consider the following 115-residue polypeptide: Large ribosomal subunit protein mL60 (115 aa).

The transit peptide at 1–23 (MLGAFNSTLARFGGLVHKVPWRL) directs the protein to the mitochondrion. Positions 88-115 (AGLQGFRKGVHKSPKWTRSTNRVNPTGF) are disordered. The segment covering 103–115 (WTRSTNRVNPTGF) has biased composition (polar residues).

It belongs to the mitochondrion-specific ribosomal protein mL60 family. In terms of assembly, component of the mitochondrial large ribosomal subunit (mt-LSU). Mature yeast 74S mitochondrial ribosomes consist of a small (37S) and a large (54S) subunit. The 37S small subunit contains a 15S ribosomal RNA (15S mt-rRNA) and at least 32 different proteins. The 54S large subunit contains a 21S rRNA (21S mt-rRNA) and at least 45 different proteins.

The protein localises to the mitochondrion. In terms of biological role, component of the mitochondrial ribosome (mitoribosome), a dedicated translation machinery responsible for the synthesis of mitochondrial genome-encoded proteins, including at least some of the essential transmembrane subunits of the mitochondrial respiratory chain. The mitoribosomes are attached to the mitochondrial inner membrane and translation products are cotranslationally integrated into the membrane. The polypeptide is Large ribosomal subunit protein mL60 (mrpl31) (Schizosaccharomyces pombe (strain 972 / ATCC 24843) (Fission yeast)).